Consider the following 468-residue polypeptide: 6-phospho-beta-galactosidase (468 aa).

D-galactose 6-phosphate is bound by residues Gln19, His116, Asn159, Glu160, and Asn297. Catalysis depends on Glu160, which acts as the Proton donor. The Nucleophile role is filled by Glu375. The D-galactose 6-phosphate site is built by Ser428, Trp429, Lys435, and Tyr437.

This sequence belongs to the glycosyl hydrolase 1 family.

It catalyses the reaction a 6-phospho-beta-D-galactoside + H2O = D-galactose 6-phosphate + an alcohol. Its pathway is carbohydrate metabolism; lactose degradation; D-galactose 6-phosphate and beta-D-glucose from lactose 6-phosphate: step 1/1. This Streptococcus agalactiae serotype III (strain NEM316) protein is 6-phospho-beta-galactosidase.